A 165-amino-acid chain; its full sequence is Neuritin-like protein (165 aa).

Residues 1–35 (MMRCCRRRCCCRQPPHALRPLLLLPLVLLPPLAAA) form the signal peptide. Ala139 carries GPI-anchor amidated alanine lipidation. A propeptide spans 140–165 (PALPMAPAPPLLAAALALAYLLRPLA) (removed in mature form).

It belongs to the neuritin family.

The protein localises to the cell membrane. The polypeptide is Neuritin-like protein (NRN1L) (Homo sapiens (Human)).